A 360-amino-acid chain; its full sequence is Mitogen-activated protein kinase 14 (360 aa).

Serine 2 bears the N-acetylserine mark. At serine 2 the chain carries Phosphoserine. Threonine 16 carries the post-translational modification Phosphothreonine. Positions 24–308 (YQNLSPVGSG…AAQALAHAYF (285 aa)) constitute a Protein kinase domain. Residues 30-38 (VGSGAYGSV) and lysine 53 each bind ATP. An N6-acetyllysine mark is found at lysine 53 and lysine 152. Aspartate 168 acts as the Proton acceptor in catalysis. At threonine 180 the chain carries Phosphothreonine; by MAP2K3, MAP2K4, MAP2K6 and autocatalysis. The TXY signature appears at 180-182 (TGY). Residue tyrosine 182 is modified to Phosphotyrosine; by MAP2K3, MAP2K4, MAP2K6 and autocatalysis. The residue at position 263 (threonine 263) is a Phosphothreonine. Position 323 is a phosphotyrosine; by ZAP70 (tyrosine 323).

It belongs to the protein kinase superfamily. CMGC Ser/Thr protein kinase family. MAP kinase subfamily. As to quaternary structure, component of a signaling complex containing at least AKAP13, PKN1, MAPK14, ZAK and MAP2K3. Within this complex, AKAP13 interacts directly with PKN1, which in turn recruits MAPK14, MAP2K3 and ZAK. Binds to a kinase interaction motif within the protein tyrosine phosphatase, PTPRR. This interaction retains MAPK14 in the cytoplasm and prevents nuclear accumulation. Interacts with SPAG9 and GADD45A. Interacts with CDC25B, CDC25C, DUSP1, DUSP10, DUSP16, NP60, SUPT20H and TAB1. Interacts with casein kinase II subunits CSNK2A1 and CSNK2B. Interacts with PPM1D. Interacts with CDK5RAP3; recruits PPM1D to MAPK14 and may regulate its dephosphorylation. Interacts with DUSP2; this interaction does not lead to catalytic activation of DUSP2 and dephosphrylation of MAPK14. It depends on Mg(2+) as a cofactor. In terms of processing, dually phosphorylated on Thr-180 and Tyr-182 by the MAP2Ks MAP2K3/MKK3, MAP2K4/MKK4 and MAP2K6/MKK6 in response to inflammatory citokines, environmental stress or growth factors, which activates the enzyme. Dual phosphorylation can also be mediated by TAB1-mediated autophosphorylation. TCR engagement in T-cells also leads to Tyr-323 phosphorylation by ZAP70. Dephosphorylated and inactivated by DUPS1, DUSP10 and DUSP16. PPM1D also mediates dephosphorylation and inactivation of MAPK14. Acetylated at Lys-53 and Lys-152 by KAT2B and EP300. Acetylation at Lys-53 increases the affinity for ATP and enhances kinase activity. Lys-53 and Lys-152 are deacetylated by HDAC3. Post-translationally, ubiquitinated. Ubiquitination leads to degradation by the proteasome pathway. As to expression, brain, heart, placenta, pancreas and skeletal muscle. Expressed to a lesser extent in lung, liver and kidney.

The protein localises to the cytoplasm. It localises to the nucleus. It catalyses the reaction L-seryl-[protein] + ATP = O-phospho-L-seryl-[protein] + ADP + H(+). The catalysed reaction is L-threonyl-[protein] + ATP = O-phospho-L-threonyl-[protein] + ADP + H(+). Its activity is regulated as follows. Activated by cell stresses such as DNA damage, heat shock, osmotic shock, anisomycin and sodium arsenite, as well as pro-inflammatory stimuli such as bacterial lipopolysaccharide (LPS) and interleukin-1. Activation occurs through dual phosphorylation of Thr-180 and Tyr-182 by either of two dual specificity kinases, MAP2K3/MKK3 or MAP2K6/MKK6, and potentially also MAP2K4/MKK4, as well as by TAB1-mediated autophosphorylation. MAPK14 phosphorylated on both Thr-180 and Tyr-182 is 10-20-fold more active than MAPK14 phosphorylated only on Thr-180, whereas MAPK14 phosphorylated on Tyr-182 alone is inactive. whereas Thr-180 is necessary for catalysis, Tyr-182 may be required for auto-activation and substrate recognition. Phosphorylated at Tyr-323 by ZAP70 in an alternative activation pathway in response to TCR signaling in T-cells. This alternative pathway is inhibited by GADD45A. Inhibited by dual specificity phosphatases, such as DUSP1, DUSP10, and DUSP16. Specifically inhibited by the binding of pyridinyl-imidazole compounds, which are cytokine-suppressive anti-inflammatory drugs (CSAID). Isoform Mxi2 is 100-fold less sensitive to these agents than the other isoforms and is not inhibited by DUSP1. Isoform Exip is not activated by MAP2K6. SB203580 is an inhibitor of MAPK14. Functionally, serine/threonine kinase which acts as an essential component of the MAP kinase signal transduction pathway. MAPK14 is one of the four p38 MAPKs which play an important role in the cascades of cellular responses evoked by extracellular stimuli such as pro-inflammatory cytokines or physical stress leading to direct activation of transcription factors. Accordingly, p38 MAPKs phosphorylate a broad range of proteins and it has been estimated that they may have approximately 200 to 300 substrates each. Some of the targets are downstream kinases which are activated through phosphorylation and further phosphorylate additional targets. RPS6KA5/MSK1 and RPS6KA4/MSK2 can directly phosphorylate and activate transcription factors such as CREB1, ATF1, the NF-kappa-B isoform RELA/NFKB3, STAT1 and STAT3, but can also phosphorylate histone H3 and the nucleosomal protein HMGN1. RPS6KA5/MSK1 and RPS6KA4/MSK2 play important roles in the rapid induction of immediate-early genes in response to stress or mitogenic stimuli, either by inducing chromatin remodeling or by recruiting the transcription machinery. On the other hand, two other kinase targets, MAPKAPK2/MK2 and MAPKAPK3/MK3, participate in the control of gene expression mostly at the post-transcriptional level, by phosphorylating ZFP36 (tristetraprolin) and ELAVL1, and by regulating EEF2K, which is important for the elongation of mRNA during translation. MKNK1/MNK1 and MKNK2/MNK2, two other kinases activated by p38 MAPKs, regulate protein synthesis by phosphorylating the initiation factor EIF4E2. MAPK14 also interacts with casein kinase II, leading to its activation through autophosphorylation and further phosphorylation of TP53/p53. In the cytoplasm, the p38 MAPK pathway is an important regulator of protein turnover. For example, CFLAR is an inhibitor of TNF-induced apoptosis whose proteasome-mediated degradation is regulated by p38 MAPK phosphorylation. In a similar way, MAPK14 phosphorylates the ubiquitin ligase SIAH2, regulating its activity towards EGLN3. MAPK14 may also inhibit the lysosomal degradation pathway of autophagy by interfering with the intracellular trafficking of the transmembrane protein ATG9. Another function of MAPK14 is to regulate the endocytosis of membrane receptors by different mechanisms that impinge on the small GTPase RAB5A. In addition, clathrin-mediated EGFR internalization induced by inflammatory cytokines and UV irradiation depends on MAPK14-mediated phosphorylation of EGFR itself as well as of RAB5A effectors. Ectodomain shedding of transmembrane proteins is regulated by p38 MAPKs as well. In response to inflammatory stimuli, p38 MAPKs phosphorylate the membrane-associated metalloprotease ADAM17. Such phosphorylation is required for ADAM17-mediated ectodomain shedding of TGF-alpha family ligands, which results in the activation of EGFR signaling and cell proliferation. Another p38 MAPK substrate is FGFR1. FGFR1 can be translocated from the extracellular space into the cytosol and nucleus of target cells, and regulates processes such as rRNA synthesis and cell growth. FGFR1 translocation requires p38 MAPK activation. In the nucleus, many transcription factors are phosphorylated and activated by p38 MAPKs in response to different stimuli. Classical examples include ATF1, ATF2, ATF6, ELK1, PTPRH, DDIT3, TP53/p53 and MEF2C and MEF2A. The p38 MAPKs are emerging as important modulators of gene expression by regulating chromatin modifiers and remodelers. The promoters of several genes involved in the inflammatory response, such as IL6, IL8 and IL12B, display a p38 MAPK-dependent enrichment of histone H3 phosphorylation on 'Ser-10' (H3S10ph) in LPS-stimulated myeloid cells. This phosphorylation enhances the accessibility of the cryptic NF-kappa-B-binding sites marking promoters for increased NF-kappa-B recruitment. Phosphorylates CDC25B and CDC25C which is required for binding to 14-3-3 proteins and leads to initiation of a G2 delay after ultraviolet radiation. Phosphorylates TIAR following DNA damage, releasing TIAR from GADD45A mRNA and preventing mRNA degradation. The p38 MAPKs may also have kinase-independent roles, which are thought to be due to the binding to targets in the absence of phosphorylation. Protein O-Glc-N-acylation catalyzed by the OGT is regulated by MAPK14, and, although OGT does not seem to be phosphorylated by MAPK14, their interaction increases upon MAPK14 activation induced by glucose deprivation. This interaction may regulate OGT activity by recruiting it to specific targets such as neurofilament H, stimulating its O-Glc-N-acylation. Required in mid-fetal development for the growth of embryo-derived blood vessels in the labyrinth layer of the placenta. Also plays an essential role in developmental and stress-induced erythropoiesis, through regulation of EPO gene expression. Isoform MXI2 activation is stimulated by mitogens and oxidative stress and only poorly phosphorylates ELK1 and ATF2. Isoform EXIP may play a role in the early onset of apoptosis. Phosphorylates S100A9 at 'Thr-113'. Phosphorylates NLRP1 downstream of MAP3K20/ZAK in response to UV-B irradiation and ribosome collisions, promoting activation of the NLRP1 inflammasome and pyroptosis. Its function is as follows. (Microbial infection) Activated by phosphorylation by M.tuberculosis EsxA in T-cells leading to inhibition of IFN-gamma production; phosphorylation is apparent within 15 minutes and is inhibited by kinase-specific inhibitors SB203580 and siRNA. This Homo sapiens (Human) protein is Mitogen-activated protein kinase 14.